Here is a 147-residue protein sequence, read N- to C-terminus: Small ribosomal subunit protein bS18 (147 aa).

Belongs to the bacterial ribosomal protein bS18 family. As to quaternary structure, part of the 30S ribosomal subunit. Forms a tight heterodimer with protein bS6.

Functionally, binds as a heterodimer with protein bS6 to the central domain of the 16S rRNA, where it helps stabilize the platform of the 30S subunit. The sequence is that of Small ribosomal subunit protein bS18 from Dehalococcoides mccartyi (strain ATCC BAA-2100 / JCM 16839 / KCTC 5957 / BAV1).